Consider the following 363-residue polypeptide: Probable dual-specificity RNA methyltransferase RlmN (363 aa).

The Proton acceptor role is filled by E106. In terms of domain architecture, Radical SAM core spans 112–345 (HEYGNSVCVT…VTIRREQGHD (234 aa)). C119 and C350 form a disulfide bridge. [4Fe-4S] cluster contacts are provided by C126, C130, and C133. S-adenosyl-L-methionine is bound by residues 176 to 177 (GE), S208, 231 to 233 (SLH), and N307. C350 serves as the catalytic S-methylcysteine intermediate.

It belongs to the radical SAM superfamily. RlmN family. [4Fe-4S] cluster is required as a cofactor.

It is found in the cytoplasm. The catalysed reaction is adenosine(2503) in 23S rRNA + 2 reduced [2Fe-2S]-[ferredoxin] + 2 S-adenosyl-L-methionine = 2-methyladenosine(2503) in 23S rRNA + 5'-deoxyadenosine + L-methionine + 2 oxidized [2Fe-2S]-[ferredoxin] + S-adenosyl-L-homocysteine. It catalyses the reaction adenosine(37) in tRNA + 2 reduced [2Fe-2S]-[ferredoxin] + 2 S-adenosyl-L-methionine = 2-methyladenosine(37) in tRNA + 5'-deoxyadenosine + L-methionine + 2 oxidized [2Fe-2S]-[ferredoxin] + S-adenosyl-L-homocysteine. Its function is as follows. Specifically methylates position 2 of adenine 2503 in 23S rRNA and position 2 of adenine 37 in tRNAs. The protein is Probable dual-specificity RNA methyltransferase RlmN of Bacillus velezensis (strain DSM 23117 / BGSC 10A6 / LMG 26770 / FZB42) (Bacillus amyloliquefaciens subsp. plantarum).